The sequence spans 303 residues: 2-phospho-L-lactate transferase (303 aa).

7,8-didemethyl-8-hydroxy-5-deazariboflavin contacts are provided by aspartate 48 and lysine 87.

It belongs to the CofD family. In terms of assembly, homodimer. It depends on Mg(2+) as a cofactor.

The catalysed reaction is (2S)-lactyl-2-diphospho-5'-guanosine + 7,8-didemethyl-8-hydroxy-5-deazariboflavin = oxidized coenzyme F420-0 + GMP + H(+). Its pathway is cofactor biosynthesis; coenzyme F420 biosynthesis. Catalyzes the transfer of the 2-phospholactate moiety from (2S)-lactyl-2-diphospho-5'-guanosine to 7,8-didemethyl-8-hydroxy-5-deazariboflavin (FO) with the formation of oxidized coenzyme F420-0 and GMP. In Methanosarcina mazei (strain ATCC BAA-159 / DSM 3647 / Goe1 / Go1 / JCM 11833 / OCM 88) (Methanosarcina frisia), this protein is 2-phospho-L-lactate transferase.